The chain runs to 188 residues: dITP/XTP pyrophosphatase (188 aa).

7-12 contacts substrate; the sequence is TGNIGK. 2 residues coordinate Mg(2+): Glu36 and Asp65. Residue Asp65 is the Proton acceptor of the active site. Substrate contacts are provided by residues Ser66, 141 to 144, Lys164, and 169 to 170; these read FGYD and HR.

The protein belongs to the HAM1 NTPase family. Homodimer. It depends on Mg(2+) as a cofactor.

The enzyme catalyses XTP + H2O = XMP + diphosphate + H(+). It catalyses the reaction dITP + H2O = dIMP + diphosphate + H(+). The catalysed reaction is ITP + H2O = IMP + diphosphate + H(+). Functionally, pyrophosphatase that catalyzes the hydrolysis of nucleoside triphosphates to their monophosphate derivatives, with a high preference for the non-canonical purine nucleotides XTP (xanthosine triphosphate), dITP (deoxyinosine triphosphate) and ITP. Seems to function as a house-cleaning enzyme that removes non-canonical purine nucleotides from the nucleotide pool, thus preventing their incorporation into DNA/RNA and avoiding chromosomal lesions. The chain is dITP/XTP pyrophosphatase from Methanopyrus kandleri (strain AV19 / DSM 6324 / JCM 9639 / NBRC 100938).